The primary structure comprises 896 residues: Zinc finger protein 574 (896 aa).

2 C2H2-type zinc fingers span residues 16 to 38 and 76 to 98; these read YVCSECNQLYGSLEEVLMHQNSH and YQCLECGQLLMSPSQLLEHQELH. Ser-113 carries the phosphoserine modification. The C2H2-type 3 zinc-finger motif lies at 126–148; that stretch reads YECVDCKALFASQELWLNHRQTH. A Phosphoserine modification is found at Ser-164. Residues 214 to 236 form a C2H2-type 4 zinc finger; that stretch reads YKCSECSQLFQLPADFLEHQATH. The segment at 239–301 is disordered; it reads APVPESQEPA…RARRNNSGEA (63 aa). Over residues 247-257 the composition is skewed to polar residues; it reads PALQQEVQASS. Residues 274–287 show a composition bias toward basic and acidic residues; sequence HSYELRNGEAIGRD. Ser-298 bears the Phosphoserine mark. C2H2-type zinc fingers lie at residues 309–331, 336–358, 364–386, and 392–413; these read LFCSACDQLFLSPHQLQQHLRSH, FKCPLCSRVFPSPSSLDQHLGDH, FLCVDCGLAFGTEALLLAHRRAH, and HSCPCGKTFVNLTKFLYHRRTH. The segment at 434-460 is disordered; the sequence is FPEPAPAETGEPEAPEPPVSEETSAGP. The segment at 466-489 adopts a C2H2-type 9 zinc-finger fold; that stretch reads YRCLLCSREFGKALQLTRHQRFVH. A C2H2-type 10; degenerate zinc finger spans residues 495 to 517; that stretch reads HKCSICGKMFKKKSHVRNHLRTH. 4 C2H2-type zinc fingers span residues 523 to 545, 551 to 573, 579 to 601, and 607 to 630; these read FPCPDCSKPFNSPANLARHRLTH, YRCGDCGKAFTQSSTLRQHRLVH, YRCQECGVRFHRPYRLLMHRYHH, and YKCRECPRSFLLRRLLEVHQLVVH. The segment at 636–659 adopts a C2H2-type 15; degenerate zinc-finger fold; sequence HRCPSCGAAFPSSLRLREHRCAAA. A C2H2-type 16 zinc finger spans residues 667-689; that stretch reads FECGTCGKKVGSAARLQAHEAAH. The tract at residues 687 to 733 is disordered; the sequence is AAHAAAGPGEVLAKEPPAPRAPRATRAPVASPAALGSTATASPAAPA. The span at 707–732 shows a compositional bias: low complexity; it reads APRATRAPVASPAALGSTATASPAAP. Ser-717 carries the post-translational modification Phosphoserine. The residue at position 724 (Thr-724) is a Phosphothreonine. Ser-728 carries the post-translational modification Phosphoserine. C2H2-type zinc fingers lie at residues 738–760, 766–788, 794–816, and 822–844; these read LECSECKKLFSTETSLQVHRRIH, YPCPDCGKAFRQSTHLKDHRRLH, FACEVCGKAFAISMRLAEHRRIH, and YSCPDCGKSYRSFSNLWKHRKTH. Arg-832 carries the asymmetric dimethylarginine modification.

Belongs to the krueppel C2H2-type zinc-finger protein family.

The protein resides in the nucleus. In terms of biological role, may be involved in transcriptional regulation. The protein is Zinc finger protein 574 (ZNF574) of Homo sapiens (Human).